Consider the following 222-residue polypeptide: Putative hemin import ATP-binding protein HrtA (222 aa).

The ABC transporter domain maps to 3 to 222 (LVVKDISKTF…QLYDGKIKNS (220 aa)). An ATP-binding site is contributed by 39–46 (GASGSGKT).

It belongs to the ABC transporter superfamily. HrtA family. In terms of assembly, the complex is composed of two ATP-binding proteins (HrtA), two transmembrane proteins (HrtB) and a solute-binding protein.

It localises to the cell membrane. Part of the ABC transporter complex hrt involved in hemin import. Responsible for energy coupling to the transport system. This chain is Putative hemin import ATP-binding protein HrtA (hrtA), found in Staphylococcus epidermidis (strain ATCC 35984 / DSM 28319 / BCRC 17069 / CCUG 31568 / BM 3577 / RP62A).